A 269-amino-acid chain; its full sequence is Hydroxyethylthiazole kinase (269 aa).

Met46 provides a ligand contact to substrate. 2 residues coordinate ATP: Arg122 and Thr168. Position 195 (Gly195) interacts with substrate.

It belongs to the Thz kinase family. Mg(2+) serves as cofactor.

The enzyme catalyses 5-(2-hydroxyethyl)-4-methylthiazole + ATP = 4-methyl-5-(2-phosphooxyethyl)-thiazole + ADP + H(+). The protein operates within cofactor biosynthesis; thiamine diphosphate biosynthesis; 4-methyl-5-(2-phosphoethyl)-thiazole from 5-(2-hydroxyethyl)-4-methylthiazole: step 1/1. Its function is as follows. Catalyzes the phosphorylation of the hydroxyl group of 4-methyl-5-beta-hydroxyethylthiazole (THZ). This chain is Hydroxyethylthiazole kinase, found in Geobacillus thermodenitrificans (strain NG80-2).